A 228-amino-acid polypeptide reads, in one-letter code: MTTAARPTFEPARGGRGKGEGDLSQLSKQYSSRDLPSHTKIKYRQATQDAPEEVRSRDFRRELEERERVVARDKNRDRPTREHTSSVSKKPRLDQIPAANLDADDPLTDEDGDEDSDEDSDDDTAALLAELEKIKKERAEEKDRKELEQKAEEERIRMENILSGNPLLNLTGPAAQSQASFKVKRRWDDDVVFKNCAKGVDEMKKQKRFVNDTLRSEFHKKFMEKYIK.

The segment at 1-126 is disordered; the sequence is MTTAARPTFE…DEDSDDDTAA (126 aa). A compositionally biased stretch (polar residues) spans 24–34; the sequence is SQLSKQYSSRD. Positions 52–84 are enriched in basic and acidic residues; sequence EEVRSRDFRRELEERERVVARDKNRDRPTREHT. Positions 102-124 are enriched in acidic residues; it reads DADDPLTDEDGDEDSDEDSDDDT. The stretch at 121-165 forms a coiled coil; the sequence is DDDTAALLAELEKIKKERAEEKDRKELEQKAEEERIRMENILSGN.

The protein belongs to the CWC15 family. As to quaternary structure, identified in the spliceosome C complex. Component of the minor spliceosome, which splices U12-type introns.

It is found in the nucleus. In terms of biological role, involved in pre-mRNA splicing as component of the spliceosome. In Xenopus laevis (African clawed frog), this protein is Protein CWC15 homolog A (cwc15-a).